We begin with the raw amino-acid sequence, 206 residues long: Tumor protein D54 (206 aa).

An N-acetylmethionine modification is found at M1. Residues 1-14 show a composition bias toward polar residues; it reads MDSAGQDINLNSPN. A disordered region spans residues 1-24; the sequence is MDSAGQDINLNSPNKGLLSDSMTD. Phosphoserine is present on residues S3, S12, S19, and S21. A coiled-coil region spans residues 38-82; that stretch reads VEGLTEAEEEELRAELTKVEEEIVTLRQVLAAKERHCGELKRRLG. Phosphoserine is present on residues S96, S149, and S161. T163 carries the phosphothreonine modification. A Phosphoserine modification is found at S166. A Phosphothreonine modification is found at T173. Residues 175–185 are compositionally biased toward basic and acidic residues; sequence KSKVVGDRENG. The segment at 175 to 206 is disordered; the sequence is KSKVVGDRENGSDNLPSSAGSGDKPLSDPAPF. Residues S192 and S195 each carry the phosphoserine modification.

Belongs to the TPD52 family. Forms a homodimer or heterodimer with other members of the family. Interacts with MAL2.

This chain is Tumor protein D54 (TPD52L2), found in Homo sapiens (Human).